Here is a 114-residue protein sequence, read N- to C-terminus: Large ribosomal subunit protein bL21c (114 aa).

This sequence belongs to the bacterial ribosomal protein bL21 family. In terms of assembly, part of the 50S ribosomal subunit.

It is found in the plastid. The protein localises to the chloroplast. This protein binds to 23S rRNA. This Staurastrum punctulatum (Green alga) protein is Large ribosomal subunit protein bL21c.